We begin with the raw amino-acid sequence, 625 residues long: Interferon-induced GTP-binding protein Mx2 (625 aa).

A Dynamin-type G domain is found at 29–302 (DLALPAIAVI…LVFHIGRCLP (274 aa)). Residues 39–46 (GDQSSGKS) form a G1 motif region. 39–46 (GDQSSGKS) contacts GTP. Positions 64-66 (VTR) are G2 motif. Residues 140–143 (DLPG) are G3 motif. Residues 140-144 (DLPGI) and 209-212 (TKPD) contribute to the GTP site. The segment at 209-212 (TKPD) is G4 motif. Residues 241 to 244 (RCRG) are G5 motif. A GED domain is found at 539-625 (REELTCHLKS…TEALKYLAKF (87 aa)).

This sequence belongs to the TRAFAC class dynamin-like GTPase superfamily. Dynamin/Fzo/YdjA family.

It is found in the cytoplasm. In Ictalurus punctatus (Channel catfish), this protein is Interferon-induced GTP-binding protein Mx2 (mx2).